The primary structure comprises 882 residues: Translation initiation factor IF-2 (882 aa).

Disordered regions lie at residues 67 to 202 (KTVS…EKAR) and 223 to 278 (ERYG…KHMK). 2 stretches are compositionally biased toward basic and acidic residues: residues 95 to 152 (VKRD…EAKA) and 161 to 202 (EQPK…EKAR). Residues 251–264 (GRRNRNKTQTKSKR) show a composition bias toward basic residues. Over residues 265-274 (GGKDAREGRE) the composition is skewed to basic and acidic residues. Residues 382–551 (PRAPVVTIMG…LLQAEVLELK (170 aa)) form the tr-type G domain. The interval 391 to 398 (GHVDHGKT) is G1. GTP is bound at residue 391 to 398 (GHVDHGKT). The segment at 416–420 (GITQH) is G2. A G3 region spans residues 437–440 (DTPG). GTP contacts are provided by residues 437–441 (DTPGH) and 491–494 (NKMD). Positions 491-494 (NKMD) are G4. Residues 527–529 (SAK) are G5.

This sequence belongs to the TRAFAC class translation factor GTPase superfamily. Classic translation factor GTPase family. IF-2 subfamily.

The protein localises to the cytoplasm. In terms of biological role, one of the essential components for the initiation of protein synthesis. Protects formylmethionyl-tRNA from spontaneous hydrolysis and promotes its binding to the 30S ribosomal subunits. Also involved in the hydrolysis of GTP during the formation of the 70S ribosomal complex. This is Translation initiation factor IF-2 from Shewanella amazonensis (strain ATCC BAA-1098 / SB2B).